The chain runs to 147 residues: Glucosamine 6-phosphate N-acetyltransferase (147 aa).

One can recognise an N-acetyltransferase domain in the interval 7 to 147 (LELRVLEESD…AHERQMRLDL (141 aa)). Residues Thr28 and 86–88 (EDV) each bind D-glucosamine 6-phosphate. Acetyl-CoA-binding positions include 88–90 (VVV) and 96–101 (GAGLGK). Residues 117-118 (YK) and Asp122 each bind D-glucosamine 6-phosphate. 131 to 133 (YEK) lines the acetyl-CoA pocket.

Belongs to the acetyltransferase family. GNA1 subfamily. In terms of assembly, homodimer. Contains poly-N-acetyllactosamines.

The protein resides in the glycosome. The enzyme catalyses D-glucosamine 6-phosphate + acetyl-CoA = N-acetyl-D-glucosamine 6-phosphate + CoA + H(+). Its pathway is nucleotide-sugar biosynthesis; UDP-N-acetyl-alpha-D-glucosamine biosynthesis; N-acetyl-alpha-D-glucosamine 1-phosphate from alpha-D-glucosamine 6-phosphate (route I): step 1/2. Its function is as follows. Involved in the biosynthesis of UDP-N-acetyl-alpha-D-glucosamine. Catalyzes the formation of N-acetyl-D-glucosamine 6-phosphate from acetyl-coenzyme A (acetyl-CoA) and D-glucosamine 6-phosphate. The protein is Glucosamine 6-phosphate N-acetyltransferase of Trypanosoma brucei brucei.